We begin with the raw amino-acid sequence, 206 residues long: Histidine biosynthesis bifunctional protein HisIE (206 aa).

A phosphoribosyl-AMP cyclohydrolase region spans residues 1–117 (MGSETTAAGD…SCFPTAPSQF (117 aa)). The interval 118–206 (LGSLDALIAE…AVALLESRHK (89 aa)) is phosphoribosyl-ATP pyrophosphohydrolase.

In the N-terminal section; belongs to the PRA-CH family. It in the C-terminal section; belongs to the PRA-PH family.

The protein resides in the cytoplasm. It catalyses the reaction 1-(5-phospho-beta-D-ribosyl)-ATP + H2O = 1-(5-phospho-beta-D-ribosyl)-5'-AMP + diphosphate + H(+). The catalysed reaction is 1-(5-phospho-beta-D-ribosyl)-5'-AMP + H2O = 1-(5-phospho-beta-D-ribosyl)-5-[(5-phospho-beta-D-ribosylamino)methylideneamino]imidazole-4-carboxamide. The protein operates within amino-acid biosynthesis; L-histidine biosynthesis; L-histidine from 5-phospho-alpha-D-ribose 1-diphosphate: step 2/9. Its pathway is amino-acid biosynthesis; L-histidine biosynthesis; L-histidine from 5-phospho-alpha-D-ribose 1-diphosphate: step 3/9. In Xanthomonas campestris pv. campestris (strain ATCC 33913 / DSM 3586 / NCPPB 528 / LMG 568 / P 25), this protein is Histidine biosynthesis bifunctional protein HisIE.